The sequence spans 518 residues: Protein nucleotidyltransferase YdiU (518 aa).

The tract at residues 1–22 is disordered; sequence MTHLQFDNRLRAELPGDPEEGP. ATP-binding residues include glycine 100, glycine 102, arginine 103, lysine 123, aspartate 135, glycine 136, arginine 193, and arginine 200. The active-site Proton acceptor is aspartate 270. 2 residues coordinate Mg(2+): asparagine 271 and aspartate 280. Position 280 (aspartate 280) interacts with ATP.

The protein belongs to the SELO family. Mg(2+) serves as cofactor. Requires Mn(2+) as cofactor.

The enzyme catalyses L-seryl-[protein] + ATP = 3-O-(5'-adenylyl)-L-seryl-[protein] + diphosphate. It carries out the reaction L-threonyl-[protein] + ATP = 3-O-(5'-adenylyl)-L-threonyl-[protein] + diphosphate. The catalysed reaction is L-tyrosyl-[protein] + ATP = O-(5'-adenylyl)-L-tyrosyl-[protein] + diphosphate. It catalyses the reaction L-histidyl-[protein] + UTP = N(tele)-(5'-uridylyl)-L-histidyl-[protein] + diphosphate. The enzyme catalyses L-seryl-[protein] + UTP = O-(5'-uridylyl)-L-seryl-[protein] + diphosphate. It carries out the reaction L-tyrosyl-[protein] + UTP = O-(5'-uridylyl)-L-tyrosyl-[protein] + diphosphate. Functionally, nucleotidyltransferase involved in the post-translational modification of proteins. It can catalyze the addition of adenosine monophosphate (AMP) or uridine monophosphate (UMP) to a protein, resulting in modifications known as AMPylation and UMPylation. The sequence is that of Protein nucleotidyltransferase YdiU from Xanthomonas campestris pv. campestris (strain 8004).